A 557-amino-acid polypeptide reads, in one-letter code: Protein NRT1/ PTR FAMILY 5.14 (557 aa).

2 helical membrane passes run A35–S55 and A78–L98. Position 103 is a phosphothreonine (T103). The next 10 helical transmembrane spans lie at I104–L124, S133–G153, F183–V203, F209–F229, I320–F340, I357–Y377, I401–K421, I443–G463, I479–I499, and Y526–S546.

The protein belongs to the major facilitator superfamily. Proton-dependent oligopeptide transporter (POT/PTR) (TC 2.A.17) family. Expressed in roots.

The protein localises to the membrane. This Arabidopsis thaliana (Mouse-ear cress) protein is Protein NRT1/ PTR FAMILY 5.14 (NPF5.14).